A 509-amino-acid chain; its full sequence is Aspartic proteinase oryzasin-1 (509 aa).

The signal sequence occupies residues 1–24 (MGTRSVALVLLAAVLLQALLPASA). A propeptide spans 25–67 (AEGLVRIALKKRPIDENSRVAARLSGEEGARRLGLRGANSLGG) (activation peptide). The 422-residue stretch at 85 to 506 (YFGEIGVGTP…DYGKMRVGFA (422 aa)) folds into the Peptidase A1 domain. Asp-103 is an active-site residue. Cysteines 116 and 122 form a disulfide. An N-linked (GlcNAc...) asparagine glycan is attached at Asn-252. A disulfide bridge links Cys-281 with Cys-285. Asp-290 is an active-site residue. Residues 315-420 (VVSQECKTVV…NQLCDKLPSP (106 aa)) enclose the Saposin B-type domain. Disulfide bonds link Cys-320–Cys-414, Cys-345–Cys-386, Cys-351–Cys-383, and Cys-428–Cys-465. N-linked (GlcNAc...) asparagine glycosylation occurs at Asn-400.

Belongs to the peptidase A1 family.

It is found in the vacuole. Its function is as follows. Involved in the breakdown of propeptides of storage proteins in protein-storage vacuoles. The protein is Aspartic proteinase oryzasin-1 of Oryza sativa subsp. japonica (Rice).